The chain runs to 174 residues: RNA polymerase sigma factor CarQ (174 aa).

A Polymerase core binding motif is present at residues 39–52 (DLLQATFLSVIRSR). The interval 86–106 (YASREDTATPASAAPDDSDPS) is disordered. Residues 136-155 (FEEIGALRGISPGAARLRAH) constitute a DNA-binding region (H-T-H motif).

Belongs to the sigma-70 factor family. ECF subfamily.

Functionally, sigma factors are initiation factors that promote the attachment of RNA polymerase to specific initiation sites and are then released. This sigma factor regulates genes for the light induced biosynthesis of carotenoids. The protein is RNA polymerase sigma factor CarQ (carQ) of Myxococcus xanthus.